The chain runs to 124 residues: Large ribosomal subunit protein bL12 (124 aa).

Belongs to the bacterial ribosomal protein bL12 family. As to quaternary structure, homodimer. Part of the ribosomal stalk of the 50S ribosomal subunit. Forms a multimeric L10(L12)X complex, where L10 forms an elongated spine to which 2 to 4 L12 dimers bind in a sequential fashion. Binds GTP-bound translation factors.

Forms part of the ribosomal stalk which helps the ribosome interact with GTP-bound translation factors. Is thus essential for accurate translation. The protein is Large ribosomal subunit protein bL12 of Bacteroides thetaiotaomicron (strain ATCC 29148 / DSM 2079 / JCM 5827 / CCUG 10774 / NCTC 10582 / VPI-5482 / E50).